The chain runs to 127 residues: Glycine cleavage system H protein (127 aa).

The region spanning 22 to 104 (KARIGITHFA…YEKAWMIVVE (83 aa)) is the Lipoyl-binding domain. Lysine 63 is modified (N6-lipoyllysine).

The protein belongs to the GcvH family. As to quaternary structure, the glycine cleavage system is composed of four proteins: P, T, L and H. Requires (R)-lipoate as cofactor.

Functionally, the glycine cleavage system catalyzes the degradation of glycine. The H protein shuttles the methylamine group of glycine from the P protein to the T protein. In terms of biological role, is also involved in protein lipoylation via its role as an octanoyl/lipoyl carrier protein intermediate. The sequence is that of Glycine cleavage system H protein from Bacillus subtilis (strain 168).